The primary structure comprises 212 residues: Orotate phosphoribosyltransferase (212 aa).

Lysine 26 provides a ligand contact to 5-phospho-alpha-D-ribose 1-diphosphate. Position 34–35 (34–35 (FF)) interacts with orotate. Residues 72–73 (YK), arginine 99, lysine 100, lysine 103, histidine 105, and 124–132 (DDVITVGTA) each bind 5-phospho-alpha-D-ribose 1-diphosphate. 2 residues coordinate orotate: threonine 128 and arginine 156.

The protein belongs to the purine/pyrimidine phosphoribosyltransferase family. PyrE subfamily. Homodimer. Mg(2+) serves as cofactor.

It catalyses the reaction orotidine 5'-phosphate + diphosphate = orotate + 5-phospho-alpha-D-ribose 1-diphosphate. It participates in pyrimidine metabolism; UMP biosynthesis via de novo pathway; UMP from orotate: step 1/2. Catalyzes the transfer of a ribosyl phosphate group from 5-phosphoribose 1-diphosphate to orotate, leading to the formation of orotidine monophosphate (OMP). The polypeptide is Orotate phosphoribosyltransferase (Ruthia magnifica subsp. Calyptogena magnifica).